An 83-amino-acid chain; its full sequence is Cytochrome b559 subunit alpha (83 aa).

A helical membrane pass occupies residues 21–35; sequence VIHSITIPSLFIAGW. Position 23 (histidine 23) interacts with heme.

The protein belongs to the PsbE/PsbF family. As to quaternary structure, heterodimer of an alpha subunit and a beta subunit. PSII is composed of 1 copy each of membrane proteins PsbA, PsbB, PsbC, PsbD, PsbE, PsbF, PsbH, PsbI, PsbJ, PsbK, PsbL, PsbM, PsbT, PsbX, PsbY, PsbZ, Psb30/Ycf12, at least 3 peripheral proteins of the oxygen-evolving complex and a large number of cofactors. It forms dimeric complexes. It depends on heme b as a cofactor.

The protein resides in the plastid. It is found in the chloroplast thylakoid membrane. Its function is as follows. This b-type cytochrome is tightly associated with the reaction center of photosystem II (PSII). PSII is a light-driven water:plastoquinone oxidoreductase that uses light energy to abstract electrons from H(2)O, generating O(2) and a proton gradient subsequently used for ATP formation. It consists of a core antenna complex that captures photons, and an electron transfer chain that converts photonic excitation into a charge separation. The sequence is that of Cytochrome b559 subunit alpha from Agrostis stolonifera (Creeping bentgrass).